A 123-amino-acid chain; its full sequence is Small ribosomal subunit protein uS12 (123 aa).

Aspartate 89 carries the 3-methylthioaspartic acid modification.

Belongs to the universal ribosomal protein uS12 family. In terms of assembly, part of the 30S ribosomal subunit. Contacts proteins S8 and S17. May interact with IF1 in the 30S initiation complex.

Its function is as follows. With S4 and S5 plays an important role in translational accuracy. Interacts with and stabilizes bases of the 16S rRNA that are involved in tRNA selection in the A site and with the mRNA backbone. Located at the interface of the 30S and 50S subunits, it traverses the body of the 30S subunit contacting proteins on the other side and probably holding the rRNA structure together. The combined cluster of proteins S8, S12 and S17 appears to hold together the shoulder and platform of the 30S subunit. The polypeptide is Small ribosomal subunit protein uS12 (Bifidobacterium animalis subsp. lactis (strain AD011)).